We begin with the raw amino-acid sequence, 246 residues long: Enolase-phosphatase E1 (246 aa).

Residues Asp-15 and Glu-17 each contribute to the Mg(2+) site. Residues 134–135 and Lys-174 each bind substrate; that span reads SS. A Mg(2+)-binding site is contributed by Asp-201.

Belongs to the HAD-like hydrolase superfamily. MasA/MtnC family. Monomer. It depends on Mg(2+) as a cofactor.

The protein resides in the cytoplasm. The protein localises to the nucleus. It carries out the reaction 5-methylsulfanyl-2,3-dioxopentyl phosphate + H2O = 1,2-dihydroxy-5-(methylsulfanyl)pent-1-en-3-one + phosphate. It functions in the pathway amino-acid biosynthesis; L-methionine biosynthesis via salvage pathway; L-methionine from S-methyl-5-thio-alpha-D-ribose 1-phosphate: step 3/6. It participates in amino-acid biosynthesis; L-methionine biosynthesis via salvage pathway; L-methionine from S-methyl-5-thio-alpha-D-ribose 1-phosphate: step 4/6. In terms of biological role, bifunctional enzyme that catalyzes the enolization of 2,3-diketo-5-methylthiopentyl-1-phosphate (DK-MTP-1-P) into the intermediate 2-hydroxy-3-keto-5-methylthiopentenyl-1-phosphate (HK-MTPenyl-1-P), which is then dephosphorylated to form the acireductone 1,2-dihydroxy-3-keto-5-methylthiopentene (DHK-MTPene). The polypeptide is Enolase-phosphatase E1 (Debaryomyces hansenii (strain ATCC 36239 / CBS 767 / BCRC 21394 / JCM 1990 / NBRC 0083 / IGC 2968) (Yeast)).